The primary structure comprises 43 residues: Protein PsbN (43 aa).

A helical membrane pass occupies residues L7–F27.

It belongs to the PsbN family.

Its subcellular location is the cellular thylakoid membrane. May play a role in photosystem I and II biogenesis. This chain is Protein PsbN, found in Synechococcus sp. (strain JA-3-3Ab) (Cyanobacteria bacterium Yellowstone A-Prime).